The primary structure comprises 217 residues: Translation initiation factor IF-3 (217 aa).

Residues 179-217 form a disordered region; it reads PRKTPLVKKEEKEAAPTKAVRTIPAPPRPTAAKVAAQQA.

This sequence belongs to the IF-3 family. As to quaternary structure, monomer.

It localises to the cytoplasm. Its function is as follows. IF-3 binds to the 30S ribosomal subunit and shifts the equilibrium between 70S ribosomes and their 50S and 30S subunits in favor of the free subunits, thus enhancing the availability of 30S subunits on which protein synthesis initiation begins. This chain is Translation initiation factor IF-3, found in Parasynechococcus marenigrum (strain WH8102).